We begin with the raw amino-acid sequence, 517 residues long: Cytochrome P450 78A5 (517 aa).

A helical membrane pass occupies residues 20–40; sequence AFASVSLIIATVAFLLSPGGL. A heme-binding site is contributed by Cys459.

Belongs to the cytochrome P450 family. Heme is required as a cofactor. In terms of tissue distribution, expressed in the periphery of the shoot apical meristem and inflorescence meristem, on the adaxial sides of developing floral organs and in developing ovules in the region where the integuments emerge.

It localises to the membrane. In terms of biological role, plays a role in regulating directional growth at the meristem/organ boundary. Is required for the promotion of leaf and floral organ growth and for the prolongation of the plastochron. Promotes organ growth in a non-cell-autonomous manner and may generate a mobile growth signal distinct from the classical phytohormones that prevents premature arrest of proliferation, until the correct primordium size has been reached. Functions probably in association with CYP78A7 in regulating relative growth of the shoot apical meristem and plant organs. Is required locally in developing ovules to stimulates cell proliferation and promote seed growth. The protein is Cytochrome P450 78A5 (CYP78A5) of Arabidopsis thaliana (Mouse-ear cress).